We begin with the raw amino-acid sequence, 86 residues long: Small ribosomal subunit protein bS20 (86 aa).

Residues 1–11 (MANIKSQKKRV) are compositionally biased toward basic residues. Positions 1–20 (MANIKSQKKRVRTNEKAHQR) are disordered.

Belongs to the bacterial ribosomal protein bS20 family.

Its function is as follows. Binds directly to 16S ribosomal RNA. In Bifidobacterium animalis subsp. lactis (strain AD011), this protein is Small ribosomal subunit protein bS20.